Reading from the N-terminus, the 218-residue chain is Probable transaldolase (218 aa).

Catalysis depends on Lys-83, which acts as the Schiff-base intermediate with substrate.

The protein belongs to the transaldolase family. Type 3B subfamily.

Its subcellular location is the cytoplasm. It carries out the reaction D-sedoheptulose 7-phosphate + D-glyceraldehyde 3-phosphate = D-erythrose 4-phosphate + beta-D-fructose 6-phosphate. Its pathway is carbohydrate degradation; pentose phosphate pathway; D-glyceraldehyde 3-phosphate and beta-D-fructose 6-phosphate from D-ribose 5-phosphate and D-xylulose 5-phosphate (non-oxidative stage): step 2/3. Its function is as follows. Transaldolase is important for the balance of metabolites in the pentose-phosphate pathway. This is Probable transaldolase from Kosmotoga olearia (strain ATCC BAA-1733 / DSM 21960 / TBF 19.5.1).